The following is an 84-amino-acid chain: MEKNNEVIQTHPLVGWDISTVDSYDALMLRLHYQTPNKSEQEGTEVGQTLWLTTDVARQFISILEAGIAKIESGDFQVNEYRRH.

In terms of biological role, represses biofilm formation in M9C glu and LB glu media but not in M9C and LB media. Seems to act as a global regulator of several genes involved in catabolite repression and stress response and regulation of the uptake and export of signaling pathways. Could be involved the regulation of indole as well as uptake and export of AI-2 through a cAMP-dependent pathway. This chain is Biofilm regulator BssS (bssS), found in Escherichia coli O6:H1 (strain CFT073 / ATCC 700928 / UPEC).